The sequence spans 308 residues: 1,4-dihydroxy-2-naphthoate octaprenyltransferase (308 aa).

The next 9 helical transmembrane spans lie at 22 to 42 (TLPLALASIFTGSALGYWANP), 47 to 67 (GLVMVLCLLTTILLQVLSNFA), 101 to 121 (WGLILMVMASFLSGSFLIGIA), 129 to 149 (FAFAGLGILAIVAAITYTVGV), 153 to 173 (GYMGLGDISVLVFFGLLGVGG), 186 to 206 (IILPAIGSGLLASAVLNINNL), 235 to 255 (ILLSVAALCYLAFAVATAISW), 256 to 276 (TNYLFVLAMPLLAKHAIFVYC), and 286 to 306 (ILAQMSMISLLINILFSLGLL).

It belongs to the MenA family. Type 1 subfamily.

The protein resides in the cell inner membrane. It catalyses the reaction an all-trans-polyprenyl diphosphate + 1,4-dihydroxy-2-naphthoate + H(+) = a 2-demethylmenaquinol + CO2 + diphosphate. It participates in quinol/quinone metabolism; menaquinone biosynthesis; menaquinol from 1,4-dihydroxy-2-naphthoate: step 1/2. Conversion of 1,4-dihydroxy-2-naphthoate (DHNA) to demethylmenaquinone (DMK). In Haemophilus influenzae (strain ATCC 51907 / DSM 11121 / KW20 / Rd), this protein is 1,4-dihydroxy-2-naphthoate octaprenyltransferase.